Here is a 273-residue protein sequence, read N- to C-terminus: MSQRTVFFISDGTGITAETFGNAILAQFETNFRHVRLPFTDSVDKAHQAVREINHAGIVDGNKSIVFTTLVDMEVLKVITDNCHGMVLDMFSTFVHPLESELNLKSSHRIGRFTDASKSSAYQSRIEAINFSLAHDDGQSNTDLEHSDIILVGVSRSGKTPTSLYLAMQYGLKASNYPLIPDDFERQQLPPALKAHKSKLFGLTIQPERLSEIRNERRPNSKYASLENCRMEVSEAEAMMRRSGIRWLSTTTKSIEEISTTILQEIRPERLAY.

153–160 contributes to the ADP binding site; it reads GVSRSGKT.

This sequence belongs to the pyruvate, phosphate/water dikinase regulatory protein family. PSRP subfamily.

The enzyme catalyses [pyruvate, water dikinase] + ADP = [pyruvate, water dikinase]-phosphate + AMP + H(+). It catalyses the reaction [pyruvate, water dikinase]-phosphate + phosphate + H(+) = [pyruvate, water dikinase] + diphosphate. Bifunctional serine/threonine kinase and phosphorylase involved in the regulation of the phosphoenolpyruvate synthase (PEPS) by catalyzing its phosphorylation/dephosphorylation. In Albidiferax ferrireducens (strain ATCC BAA-621 / DSM 15236 / T118) (Rhodoferax ferrireducens), this protein is Putative phosphoenolpyruvate synthase regulatory protein.